The following is a 407-amino-acid chain: Protein-glutamine gamma-glutamyltransferase (407 aa).

The first 31 residues, 1 to 31 (MRIRRRALVFATMSAVLCTAGFMPSAGEAAA), serve as a signal peptide directing secretion. The propeptide occupies 32-76 (DNGAGEETKSYAETYRLTADDVANINALNESAPAASSAGPSFRAP). Residues 62–72 (SAPAASSAGPS) are compositionally biased toward low complexity. Residues 62-98 (SAPAASSAGPSFRAPDSDDRVTPPAEPLDRMPDPYRP) form a disordered region. Over residues 76–94 (PDSDDRVTPPAEPLDRMPD) the composition is skewed to basic and acidic residues. Residue Cys-140 is part of the active site. Positions 282 to 322 (QDRSSSADKRKYGDPDAFRPAPGTGLVDMSRDRNIPRSPTS) are disordered. Residues 286-298 (SSADKRKYGDPDA) show a composition bias toward basic and acidic residues. Catalysis depends on residues Asp-331 and His-350.

This sequence belongs to the bacterial TGase family.

It carries out the reaction L-glutaminyl-[protein] + L-lysyl-[protein] = [protein]-L-lysyl-N(6)-5-L-glutamyl-[protein] + NH4(+). Functionally, catalyzes the cross-linking of proteins and the conjugation of polyamines to proteins. The chain is Protein-glutamine gamma-glutamyltransferase from Streptomyces mobaraensis (Streptoverticillium mobaraense).